The following is a 586-amino-acid chain: Clathrin heavy chain linker domain-containing protein 1 (586 aa).

The stretch at 174–232 (MNLDALTKYMKHLEDKYAEIKQAMLIKYVPAQRKSDLDEEMIVLLKRRDVAENLNRKLQ) forms a coiled coil.

The polypeptide is Clathrin heavy chain linker domain-containing protein 1 (CLHC1) (Macaca fascicularis (Crab-eating macaque)).